The sequence spans 504 residues: uncharacterized protein (504 aa).

Disordered regions lie at residues 1–59 and 171–255; these read MSSS…KNEY and GVNS…NQRL. Basic and acidic residues-rich tracts occupy residues 36–50 and 199–212; these read KPIDKEKEKEKKEIG and RAETPKGRKTESRQ. Positions 213 to 232 are enriched in polar residues; that stretch reads SNRGNNDNGDQRMTSKATTR.

This is an uncharacterized protein from Caenorhabditis elegans.